The chain runs to 426 residues: Formate-dependent phosphoribosylglycinamide formyltransferase (426 aa).

N(1)-(5-phospho-beta-D-ribosyl)glycinamide contacts are provided by residues 26–27 and glutamate 86; that span reads EL. ATP contacts are provided by residues arginine 118, lysine 158, 197 to 200, and glutamate 205; that span reads EEFI. The ATP-grasp domain occupies 123–324; it reads EAIASTGART…EFALHAKAVL (202 aa). 2 residues coordinate Mg(2+): glutamate 279 and glutamate 293. Residues aspartate 300, lysine 374, and 381 to 382 each bind N(1)-(5-phospho-beta-D-ribosyl)glycinamide; that span reads RR.

The protein belongs to the PurK/PurT family. As to quaternary structure, homodimer.

It catalyses the reaction N(1)-(5-phospho-beta-D-ribosyl)glycinamide + formate + ATP = N(2)-formyl-N(1)-(5-phospho-beta-D-ribosyl)glycinamide + ADP + phosphate + H(+). Its pathway is purine metabolism; IMP biosynthesis via de novo pathway; N(2)-formyl-N(1)-(5-phospho-D-ribosyl)glycinamide from N(1)-(5-phospho-D-ribosyl)glycinamide (formate route): step 1/1. Its function is as follows. Involved in the de novo purine biosynthesis. Catalyzes the transfer of formate to 5-phospho-ribosyl-glycinamide (GAR), producing 5-phospho-ribosyl-N-formylglycinamide (FGAR). Formate is provided by PurU via hydrolysis of 10-formyl-tetrahydrofolate. The protein is Formate-dependent phosphoribosylglycinamide formyltransferase of Methanocella arvoryzae (strain DSM 22066 / NBRC 105507 / MRE50).